Consider the following 191-residue polypeptide: Ribonuclease HII (191 aa).

The RNase H type-2 domain maps to Y4 to Q191. Residues D10, E11, and D106 each coordinate a divalent metal cation.

Belongs to the RNase HII family. Mn(2+) is required as a cofactor. Requires Mg(2+) as cofactor.

It localises to the cytoplasm. It catalyses the reaction Endonucleolytic cleavage to 5'-phosphomonoester.. Functionally, endonuclease that specifically degrades the RNA of RNA-DNA hybrids. The sequence is that of Ribonuclease HII from Prochlorococcus marinus (strain SARG / CCMP1375 / SS120).